Reading from the N-terminus, the 236-residue chain is Small ribosomal subunit protein eS6 (236 aa).

2 positions are modified to phosphoserine: Ser-232 and Ser-233.

Belongs to the eukaryotic ribosomal protein eS6 family. In terms of processing, phosphorylated.

The protein is Small ribosomal subunit protein eS6 (RPS6) of Debaryomyces hansenii (strain ATCC 36239 / CBS 767 / BCRC 21394 / JCM 1990 / NBRC 0083 / IGC 2968) (Yeast).